We begin with the raw amino-acid sequence, 547 residues long: Riboflavin transporter RibJ (547 aa).

Residues 1–11 are Cytoplasmic-facing; the sequence is MLPSFTRKPAD. Residues 12-32 form a helical membrane-spanning segment; it reads HPIGYLVALSGLLMQLMSYGI. Residues 33 to 58 lie on the Extracellular side of the membrane; it reads DNSYSIFSEDMHNDPSLGFPSITAIS. Residues 59–79 form a helical membrane-spanning segment; that stretch reads LGNSVSLGLSPAFGVLAGFCV. The Cytoplasmic segment spans residues 80–85; the sequence is DRLPPR. The helical transmembrane segment at 86–106 threads the bilayer; it reads FMMALSTILLFTGLWISSTLA. The Extracellular segment spans residues 107–108; it reads AN. The helical transmembrane segment at 109-129 threads the bilayer; that stretch reads IYVVTFTYCLFASIGTACMLS. Residues 130 to 144 are Cytoplasmic-facing; the sequence is PGAAATSSWFNRYQG. Residues 145–165 traverse the membrane as a helical segment; it reads LAMGINFAGGGIGSAIIPPLA. Residues 166-175 lie on the Extracellular side of the membrane; it reads GKWVVAYGWR. Residues 176-196 form a helical membrane-spanning segment; the sequence is KAFQLMSIFCAIGVLATALSA. The Cytoplasmic segment spans residues 197 to 344; sequence RRREPKRDDS…MFTLPFMGNF (148 aa). The interval 198–293 is disordered; it reads RREPKRDDSS…EGLDVTEQSQ (96 aa). A compositionally biased stretch (basic and acidic residues) spans 244–255; the sequence is NEGKEDVREMGR. A helical membrane pass occupies residues 345–365; sequence LCWFIYSWAFYSLIYAAVPYI. Residues 366–386 lie on the Extracellular side of the membrane; the sequence is SSMGKPGTVYAGVPPIPTDVA. The chain crosses the membrane as a helical span at residues 387-407; sequence ATLFTFYGVFQVVGSVLVGWL. The Cytoplasmic portion of the chain corresponds to 408-412; it reads ASLVT. The helical transmembrane segment at 413 to 433 threads the bilayer; that stretch reads AEFAYVFCATVGGIGCGLLAL. At 434–437 the chain is on the extracellular side; the sequence is GRSY. Residues 438–458 form a helical membrane-spanning segment; that stretch reads VAFALLLCIIGFCMAGMFAVM. The Cytoplasmic segment spans residues 459–470; that stretch reads PTLIATHLYGPN. Residues 471–491 form a helical membrane-spanning segment; the sequence is LGFYFGAVFLAGVVGGFVAPP. The Extracellular portion of the chain corresponds to 492 to 505; sequence MQATIQLRNNGSYA. The N-linked (GlcNAc...) asparagine glycan is linked to N501. A helical membrane pass occupies residues 506–526; the sequence is FVCVVMSVSMTLSALVCYATL. Topologically, residues 527–547 are cytoplasmic; it reads WRSKRSGIVLAARKTKLVEIM.

The protein belongs to the major facilitator superfamily. RibJ family.

Its subcellular location is the cell membrane. Its function is as follows. Transporter involved in riboflavin (vitamin B2) uptake. Also transports FMN and FAD. The polypeptide is Riboflavin transporter RibJ (Trypanosoma brucei brucei (strain 927/4 GUTat10.1)).